The sequence spans 317 residues: Beta-ketoacyl-[acyl-carrier-protein] synthase III (317 aa).

Residues Cys-112 and His-244 contribute to the active site. The tract at residues 245–249 (QANLR) is ACP-binding. The active site involves Asn-274.

It belongs to the thiolase-like superfamily. FabH family. Homodimer.

It is found in the cytoplasm. It catalyses the reaction malonyl-[ACP] + acetyl-CoA + H(+) = 3-oxobutanoyl-[ACP] + CO2 + CoA. It functions in the pathway lipid metabolism; fatty acid biosynthesis. Catalyzes the condensation reaction of fatty acid synthesis by the addition to an acyl acceptor of two carbons from malonyl-ACP. Catalyzes the first condensation reaction which initiates fatty acid synthesis and may therefore play a role in governing the total rate of fatty acid production. Possesses both acetoacetyl-ACP synthase and acetyl transacylase activities. Its substrate specificity determines the biosynthesis of branched-chain and/or straight-chain of fatty acids. In Aliivibrio fischeri (strain ATCC 700601 / ES114) (Vibrio fischeri), this protein is Beta-ketoacyl-[acyl-carrier-protein] synthase III.